The sequence spans 646 residues: MSDEIFSTTLAYTKSPKATKRTSFQDELIRAITARSARQRSSEYSDDFDSDEIVSLGEFSDTSTDESLVRKKMNDFHISDDEEKNSPRLSFLKTKKVNRAISNDALDSSTPGSEGSSPDAQEDVTGDSLPKSQNDDREVGREIITVKPTPRMHPVKRSTSSGETSSGLDADGHFKPSPQPRSMLKKSSHTEEGVRPGVDKEHSISEASAPTPSLPRQNGTELQTEEKIYSENLDLEDSLLQSLTSSSFKESPGGCTSPGSQEKVPIKDHDGEPTEIWDSLLSNENEGSSVLVNCVTPELEQPKDGQVAADDLEEEREKGGFTEDDLTTDPLLSTSPSVITPTEPAEPAKKANEDRNTKNKKTTNNRVSSASGRLMTSEFLKRSGPTKRSPSAATSSHYLGSLKVLDQKQPRKQSLEPDKADHIRAAVYQEWLEKKNVYLHEMHRIKRIESENLRIQNEQKKAAKREEALASFEAWKAMKEKEAKRIAAKKRLEEKNKKKTEEENAMRKGEALQAFEKWKEKKLEYLKEKTRREKEYERAKKQKEEEAVAEKKKDSLTAFEKWSERKEALLKQKEKEKINERRKEELKRAEKKDKDKQAISEYEKWLEKKERQERIERKQKKRHSFLESETHPPWSPPSRTAPSKVF.

N-acetylserine is present on Ser-2. Tyr-12 is subject to Phosphotyrosine. Disordered regions lie at residues 75–226 (DFHI…QTEE), 242–418 (SLTS…LEPD), 491–511 (RLEE…KGEA), 531–554 (RREK…KKKD), 570–597 (LKQK…KDKQ), and 609–646 (KERQ…SKVF). Polar residues-rich tracts occupy residues 105–119 (ALDS…SSPD) and 157–167 (RSTSSGETSSG). Over residues 188–204 (SHTEEGVRPGVDKEHSI) the composition is skewed to basic and acidic residues. Polar residues-rich tracts occupy residues 205-222 (SEAS…GTEL), 280-291 (LLSNENEGSSVL), and 330-340 (PLLSTSPSVIT). Residues 346–357 (EPAKKANEDRNT) show a composition bias toward basic and acidic residues. Residues 386 to 398 (TKRSPSAATSSHY) are compositionally biased toward polar residues. Over residues 405–418 (LDQKQPRKQSLEPD) the composition is skewed to basic and acidic residues. Residues 442–596 (MHRIKRIESE…KRAEKKDKDK (155 aa)) are a coiled coil. Positions 637-646 (PSRTAPSKVF) are enriched in polar residues.

In terms of assembly, binds to purified microtubules via its C-terminus.

Its subcellular location is the cytoplasm. It localises to the cytoskeleton. The protein localises to the spindle. In terms of biological role, involved in organization of the bipolar mitotic spindle. Required for bipolar spindle assembly, mitosis progression and cytokinesis. May act by stabilizing interphase microtubules. This Mus musculus (Mouse) protein is Microtubule-associated protein 9 (Map9).